The following is a 149-amino-acid chain: Transcriptional regulator MraZ (149 aa).

2 consecutive SpoVT-AbrB domains span residues 7–54 (KYIN…GIAH) and 83–126 (AVQL…QPQN).

The protein belongs to the MraZ family. As to quaternary structure, forms oligomers.

Its subcellular location is the cytoplasm. The protein resides in the nucleoid. In Rickettsia typhi (strain ATCC VR-144 / Wilmington), this protein is Transcriptional regulator MraZ.